Reading from the N-terminus, the 517-residue chain is Dermokine (517 aa).

A signal peptide spans 1 to 21 (MKLQGSLACLLLALCLGGGAA). Disordered stretches follow at residues 51-83 (VGQG…MGSR) and 123-364 (AGSW…IQKE). Gly residues-rich tracts occupy residues 127 to 145 (GTSG…GVQG) and 167 to 176 (GSVGQGGNGG). A compositionally biased stretch (polar residues) spans 197–206 (RGNNQNSGCT). The span at 212–235 (GSHESFSNSGGSSNDGSRGSQGSH) shows a compositional bias: low complexity. The span at 236 to 250 (GSNGQGSSGRGGGQG) shows a compositional bias: gly residues. Over residues 251–289 (NSDNNGSSSSSSGSNSGNSNSGNSGNSNSGNSGNSGSGS) the composition is skewed to low complexity. Composition is skewed to gly residues over residues 308–332 (GSRG…GGGN) and 347–358 (GGSGSQGHGSNG).

It belongs to the dermokine family. In terms of assembly, homooligomer. Seems to be able to homodimerize and homotrimerize. Post-translationally, O-glycosylated. Highly expressed in stratified epithelia; such as the skin, tongue, esophagus, forestomach and vagina. Also found in lung, trachea and urinary bladder.

The protein localises to the secreted. Its function is as follows. May act as a soluble regulator of keratinocyte differentiation. This chain is Dermokine (Dmkn), found in Mus musculus (Mouse).